We begin with the raw amino-acid sequence, 208 residues long: FMN-dependent NADH:quinone oxidoreductase 1 (208 aa).

This sequence belongs to the azoreductase type 1 family. As to quaternary structure, homodimer. It depends on FMN as a cofactor.

It carries out the reaction 2 a quinone + NADH + H(+) = 2 a 1,4-benzosemiquinone + NAD(+). It catalyses the reaction N,N-dimethyl-1,4-phenylenediamine + anthranilate + 2 NAD(+) = 2-(4-dimethylaminophenyl)diazenylbenzoate + 2 NADH + 2 H(+). In terms of biological role, quinone reductase that provides resistance to thiol-specific stress caused by electrophilic quinones. Its function is as follows. Also exhibits azoreductase activity. Catalyzes the reductive cleavage of the azo bond in aromatic azo compounds to the corresponding amines. The polypeptide is FMN-dependent NADH:quinone oxidoreductase 1 (Bacillus licheniformis (strain ATCC 14580 / DSM 13 / JCM 2505 / CCUG 7422 / NBRC 12200 / NCIMB 9375 / NCTC 10341 / NRRL NRS-1264 / Gibson 46)).